A 439-amino-acid polypeptide reads, in one-letter code: Adenylosuccinate synthetase (439 aa).

GTP is bound by residues 25–31 (GDEGKGK), 53–55 (GHT), and K62. D26 acts as the Proton acceptor in catalysis. Mg(2+) is bound by residues D26 and G53. IMP contacts are provided by residues 26–29 (DEGK) and 51–54 (NAGH). Residue H54 is the Proton donor of the active site. Positions 141, 155, 232, and 247 each coordinate IMP. T307 is a binding site for GTP. 307–313 (TTTKRPR) contributes to the substrate binding site. R311 is a binding site for IMP. GTP is bound by residues R313, 339–341 (KLD), and 425–427 (GVG).

This sequence belongs to the adenylosuccinate synthetase family. As to quaternary structure, homodimer. Requires Mg(2+) as cofactor.

Its subcellular location is the cytoplasm. The catalysed reaction is IMP + L-aspartate + GTP = N(6)-(1,2-dicarboxyethyl)-AMP + GDP + phosphate + 2 H(+). It functions in the pathway purine metabolism; AMP biosynthesis via de novo pathway; AMP from IMP: step 1/2. Functionally, plays an important role in the salvage pathway for purine nucleotide biosynthesis. Catalyzes the first commited step in the biosynthesis of AMP from IMP. This chain is Adenylosuccinate synthetase (ADSS), found in Plasmodium berghei (strain Anka).